The chain runs to 252 residues: Small ribosomal subunit protein uS3 (252 aa).

The 69-residue stretch at 38-106 folds into the KH type-2 domain; sequence IRKYIHARLS…EVQINIFEIK (69 aa). A disordered region spans residues 214–252; it reads PLAGMDKKQSGTGGGKGGDAPRGKSNFNKGGKPDARKRK. The span at 224 to 233 shows a compositional bias: gly residues; the sequence is GTGGGKGGDA.

The protein belongs to the universal ribosomal protein uS3 family. As to quaternary structure, part of the 30S ribosomal subunit. Forms a tight complex with proteins S10 and S14.

Functionally, binds the lower part of the 30S subunit head. Binds mRNA in the 70S ribosome, positioning it for translation. This chain is Small ribosomal subunit protein uS3, found in Flavobacterium johnsoniae (strain ATCC 17061 / DSM 2064 / JCM 8514 / BCRC 14874 / CCUG 350202 / NBRC 14942 / NCIMB 11054 / UW101) (Cytophaga johnsonae).